Consider the following 275-residue polypeptide: 4-hydroxy-3-methylbut-2-enyl diphosphate reductase (275 aa).

Position 12 (Cys-12) interacts with [4Fe-4S] cluster. (2E)-4-hydroxy-3-methylbut-2-enyl diphosphate is bound by residues His-40 and His-70. 2 residues coordinate dimethylallyl diphosphate: His-40 and His-70. 2 residues coordinate isopentenyl diphosphate: His-40 and His-70. A [4Fe-4S] cluster-binding site is contributed by Cys-92. His-119 contacts (2E)-4-hydroxy-3-methylbut-2-enyl diphosphate. His-119 provides a ligand contact to dimethylallyl diphosphate. His-119 is an isopentenyl diphosphate binding site. The active-site Proton donor is the Glu-121. Position 151 (Thr-151) interacts with (2E)-4-hydroxy-3-methylbut-2-enyl diphosphate. Residue Cys-181 coordinates [4Fe-4S] cluster. (2E)-4-hydroxy-3-methylbut-2-enyl diphosphate contacts are provided by Ser-209, Ser-210, Asn-211, and Ser-251. The dimethylallyl diphosphate site is built by Ser-209, Ser-210, Asn-211, and Ser-251. Residues Ser-209, Ser-210, Asn-211, and Ser-251 each coordinate isopentenyl diphosphate.

This sequence belongs to the IspH family. [4Fe-4S] cluster is required as a cofactor.

The catalysed reaction is isopentenyl diphosphate + 2 oxidized [2Fe-2S]-[ferredoxin] + H2O = (2E)-4-hydroxy-3-methylbut-2-enyl diphosphate + 2 reduced [2Fe-2S]-[ferredoxin] + 2 H(+). It catalyses the reaction dimethylallyl diphosphate + 2 oxidized [2Fe-2S]-[ferredoxin] + H2O = (2E)-4-hydroxy-3-methylbut-2-enyl diphosphate + 2 reduced [2Fe-2S]-[ferredoxin] + 2 H(+). The protein operates within isoprenoid biosynthesis; dimethylallyl diphosphate biosynthesis; dimethylallyl diphosphate from (2E)-4-hydroxy-3-methylbutenyl diphosphate: step 1/1. Its pathway is isoprenoid biosynthesis; isopentenyl diphosphate biosynthesis via DXP pathway; isopentenyl diphosphate from 1-deoxy-D-xylulose 5-phosphate: step 6/6. In terms of biological role, catalyzes the conversion of 1-hydroxy-2-methyl-2-(E)-butenyl 4-diphosphate (HMBPP) into a mixture of isopentenyl diphosphate (IPP) and dimethylallyl diphosphate (DMAPP). Acts in the terminal step of the DOXP/MEP pathway for isoprenoid precursor biosynthesis. The sequence is that of 4-hydroxy-3-methylbut-2-enyl diphosphate reductase from Thermotoga maritima (strain ATCC 43589 / DSM 3109 / JCM 10099 / NBRC 100826 / MSB8).